Consider the following 291-residue polypeptide: Short-chain dehydrogenase/reductase GME11359 (291 aa).

Positions 18, 67, 96, 177, 181, and 209 each coordinate NADP(+). Tyrosine 177 (proton acceptor) is an active-site residue. Lysine 181 functions as the Lowers pKa of active site Tyr in the catalytic mechanism.

This sequence belongs to the short-chain dehydrogenases/reductases (SDR) family.

The protein operates within secondary metabolite biosynthesis. Short-chain dehydrogenase/reductase; part of the gene cluster that mediates the biosynthesis of dibenzodioxocinones such as pestalotiollide B, a novel class of inhibitors against cholesterol ester transfer protein (CEPT). The biosynthesis initiates from condensation of acetate and malonate units catalyzed by the non-reducing PKS pks8/GME11356. Pks8/GME11356 lacks a thioesterase (TE) domain, which is important to the cyclizing of the third ring of atrochrysone carboxylic acid, and the esterase GME11355 might play the role of TE and catalyzes the cyclization reaction of the C ring. The lactamase-like protein GME11357 (or other beta-lactamases in Pestalotiopsis microspora) probably hydrolyzes the thioester bond between the ACP of pks8/GME11356 and the intermediate to release atrochrysone carboxylic acid, which is spontaneously dehydrates to form endocrocin anthrone. Endocrocin anthrone is further converted to emodin via the endocrocin intermediate. Emodin is then oxidized by several enzymes such as the Baeyer-Villiger oxidase GME11358, the oxidoreductase GME11367, the short chain dehydrogenase/reductase GME11373, as well as by other oxidoreductases from the cluster, to modify the A and C rings and open the B ring, and finally yield monodictyphenone. The prenyltransferase GME11375 may catalyze the addition reaction between the C5 side chains and the carbon bone of dibenzodioxocinones. The remaining biochemical reactions to the final product dibenzodioxocinones should be methylation catalyzed by methyltransferase GME11366 and reduction and lactonization reaction catalyzed by a series of oxidordeuctases. This is Short-chain dehydrogenase/reductase GME11359 from Pestalotiopsis microspora.